The following is a 131-amino-acid chain: Protein FON2 SPARE1 (131 aa).

The N-terminal stretch at 1–22 is a signal peptide; the sequence is MSRRLGAAAAVLLLWLAVLTFA. The tract at residues 67-131 is disordered; it reads SPSSLTTTDR…VPTGPNPLHH (65 aa). A compositionally biased stretch (basic residues) spans 76 to 97; that stretch reads RHHHHHRHHGHHHHRGHDRWNR.

Belongs to the CLV3/ESR signal peptide family. Expressed in all aerial apical meristems, including the floral and inflorescence meristems in the reproductive phase and the shoot apical meristem in the vegetative phase. Also detected in the primordia of lateral organs such as the leaf and the floral organs.

The protein localises to the secreted. Involved in the maintenance of the floral meristem and of the shoot apical meristem in the vegetative phase. Suppresses the fon2 mutation and acts independently of FON1. In Oryza sativa subsp. japonica, the protein has a single amino acid substitution at the putative processing site of the signal peptide and is inactive. This is Protein FON2 SPARE1 (FOS1) from Oryza sativa subsp. indica (Rice).